A 205-amino-acid chain; its full sequence is Small ribosomal subunit protein uS4 (205 aa).

The tract at residues 1-44 (MSKRHSQKYKIDRRMGENLWGRPKSPVNSRSYGPGQHGQRRKTK) is disordered. Positions 94 to 173 (SRLDAIVYRC…LPEYIDLDAK (80 aa)) constitute an S4 RNA-binding domain.

The protein belongs to the universal ribosomal protein uS4 family. As to quaternary structure, part of the 30S ribosomal subunit. Contacts protein S5. The interaction surface between S4 and S5 is involved in control of translational fidelity.

Functionally, one of the primary rRNA binding proteins, it binds directly to 16S rRNA where it nucleates assembly of the body of the 30S subunit. With S5 and S12 plays an important role in translational accuracy. This is Small ribosomal subunit protein uS4 from Maricaulis maris (strain MCS10) (Caulobacter maris).